The chain runs to 607 residues: NAD-dependent malic enzyme 2, mitochondrial (607 aa).

Residues 1-32 (MMWKNIAGLSKAAAAARTHGSRRCFSTAIPGP) constitute a mitochondrion transit peptide. Tyr-136 (proton donor) is an active-site residue. Arg-189 is a binding site for NAD(+). Lys-207 serves as the catalytic Proton acceptor. Residues Glu-278, Asp-279, and Asp-302 each coordinate a divalent metal cation. Residues Asp-302 and Asn-449 each contribute to the NAD(+) site.

This sequence belongs to the malic enzymes family. As to quaternary structure, homodimer. Heterodimer of two related subunits in NAD-MEH complex. Interacts with NAD-ME1. It depends on Mg(2+) as a cofactor. Requires Mn(2+) as cofactor. In terms of tissue distribution, expressed in leaves, stems, flowers, and roots (at protein level). Present in pollen.

It localises to the mitochondrion. It carries out the reaction (S)-malate + NAD(+) = pyruvate + CO2 + NADH. With respect to regulation, activated by 2-ketoglutarate, phosphoenolpyruvate (PEP), fructose 1,6-biphosphate (FBP) and coenzyme A (acetyl-CoA and CoA) as homodimer and by oxaloacetate (OAA), 2-ketoglutarate, succinate, fumarate and CoA as heterodimer NAD-MEH. Repressed by succinate and fumarate as homodimer, in the presence of NAD(+) and competitively toward the substrate L-malate. Functionally, involved in the regulation of sugars and amino acids metabolisms during the night period. The protein is NAD-dependent malic enzyme 2, mitochondrial (NAD-ME2) of Arabidopsis thaliana (Mouse-ear cress).